We begin with the raw amino-acid sequence, 261 residues long: Imidazole glycerol phosphate synthase subunit HisF (261 aa).

Active-site residues include aspartate 16 and aspartate 135.

This sequence belongs to the HisA/HisF family. In terms of assembly, heterodimer of HisH and HisF.

Its subcellular location is the cytoplasm. It carries out the reaction 5-[(5-phospho-1-deoxy-D-ribulos-1-ylimino)methylamino]-1-(5-phospho-beta-D-ribosyl)imidazole-4-carboxamide + L-glutamine = D-erythro-1-(imidazol-4-yl)glycerol 3-phosphate + 5-amino-1-(5-phospho-beta-D-ribosyl)imidazole-4-carboxamide + L-glutamate + H(+). Its pathway is amino-acid biosynthesis; L-histidine biosynthesis; L-histidine from 5-phospho-alpha-D-ribose 1-diphosphate: step 5/9. IGPS catalyzes the conversion of PRFAR and glutamine to IGP, AICAR and glutamate. The HisF subunit catalyzes the cyclization activity that produces IGP and AICAR from PRFAR using the ammonia provided by the HisH subunit. The polypeptide is Imidazole glycerol phosphate synthase subunit HisF (Mycobacterium marinum (strain ATCC BAA-535 / M)).